Reading from the N-terminus, the 133-residue chain is MKPQFVGILLSSLLGAALGNRMRCYNCGGSPSSSCKEAVTTCGEGRPQPGLEQIKLPGNPPVTLIHQHPACVAAHHCNQVETESVGDVTYPAHRDCYLGDLCNSAVASHVAPAGILAAAATALTCLLPGLWSG.

An N-terminal signal peptide occupies residues 1-19 (MKPQFVGILLSSLLGAALG). Residues 22-116 (MRCYNCGGSP…ASHVAPAGIL (95 aa)) form the UPAR/Ly6 domain. A disulfide bridge links cysteine 27 with cysteine 35. 2 O-linked (GalNAc...) threonine glycosylation sites follow: threonine 40 and threonine 41. Cystine bridges form between cysteine 42-cysteine 71 and cysteine 77-cysteine 96. The GPI-anchor amidated serine moiety is linked to residue serine 104. Positions 105-133 (AVASHVAPAGILAAAATALTCLLPGLWSG) are cleaved as a propeptide — removed in mature form.

In terms of assembly, homodimer. In terms of processing, O-glycosylated. In terms of tissue distribution, expressed in the adult lung, and in fetal liver, lung, kidney, brain and spleen.

It localises to the cell membrane. The protein localises to the cell projection. The protein resides in the filopodium. The sequence is that of Lymphocyte antigen 6 complex locus protein G6d (LY6G6D) from Homo sapiens (Human).